The following is a 218-amino-acid chain: Envelope glycoprotein L (218 aa).

Residues 57–185 (KLVKATRLDF…LGPPPLGCFT (129 aa)) form an interaction with gH region. The 159-residue stretch at 60 to 218 (KATRLDFTWG…ASYYANLQKT (159 aa)) folds into the gL alphaherpesvirus-type domain. 2 disulfide bridges follow: Cys-81/Cys-113 and Cys-183/Cys-206.

The protein belongs to the herpesviridae glycoprotein L (gL) family. Alphaherpesvirinae gL subfamily. As to quaternary structure, interacts with glycoprotein H (gH); this interaction is necessary for the correct processing and cell surface expression of gH. The heterodimer gH/gL seems to interact with gB trimers during fusion.

Its subcellular location is the virion membrane. It localises to the host cell membrane. The protein localises to the host Golgi apparatus. The protein resides in the host trans-Golgi network. In terms of biological role, the heterodimer glycoprotein H-glycoprotein L is required for the fusion of viral and plasma membranes leading to virus entry into the host cell. Acts as a functional inhibitor of gH and maintains gH in an inhibited form. Upon binding to host integrins, gL dissociates from gH leading to activation of the viral fusion glycoproteins gB and gH. This chain is Envelope glycoprotein L, found in Equus caballus (Horse).